Consider the following 193-residue polypeptide: Endoribonuclease YbeY (193 aa).

Positions 109, 113, and 119 each coordinate Zn(2+). A disordered region spans residues 143–193 (GAALREGRREGRAGEAKDRWTRSPTSISTPSRSGSTARGSRAKTSRAGSRT). The span at 147–163 (REGRREGRAGEAKDRWT) shows a compositional bias: basic and acidic residues. Residues 164–181 (RSPTSISTPSRSGSTARG) show a composition bias toward low complexity.

This sequence belongs to the endoribonuclease YbeY family. It depends on Zn(2+) as a cofactor.

Its subcellular location is the cytoplasm. Functionally, single strand-specific metallo-endoribonuclease involved in late-stage 70S ribosome quality control and in maturation of the 3' terminus of the 16S rRNA. The sequence is that of Endoribonuclease YbeY from Anaeromyxobacter dehalogenans (strain 2CP-C).